Consider the following 365-residue polypeptide: UDP-N-acetylglucosamine--N-acetylmuramyl-(pentapeptide) pyrophosphoryl-undecaprenol N-acetylglucosamine transferase (365 aa).

Residues 17-19, asparagine 129, arginine 167, serine 194, isoleucine 250, 269-274, and glutamine 295 contribute to the UDP-N-acetyl-alpha-D-glucosamine site; these read TGG and ALTVSE.

The protein belongs to the glycosyltransferase 28 family. MurG subfamily.

It localises to the cell inner membrane. It carries out the reaction di-trans,octa-cis-undecaprenyl diphospho-N-acetyl-alpha-D-muramoyl-L-alanyl-D-glutamyl-meso-2,6-diaminopimeloyl-D-alanyl-D-alanine + UDP-N-acetyl-alpha-D-glucosamine = di-trans,octa-cis-undecaprenyl diphospho-[N-acetyl-alpha-D-glucosaminyl-(1-&gt;4)]-N-acetyl-alpha-D-muramoyl-L-alanyl-D-glutamyl-meso-2,6-diaminopimeloyl-D-alanyl-D-alanine + UDP + H(+). It functions in the pathway cell wall biogenesis; peptidoglycan biosynthesis. Cell wall formation. Catalyzes the transfer of a GlcNAc subunit on undecaprenyl-pyrophosphoryl-MurNAc-pentapeptide (lipid intermediate I) to form undecaprenyl-pyrophosphoryl-MurNAc-(pentapeptide)GlcNAc (lipid intermediate II). The protein is UDP-N-acetylglucosamine--N-acetylmuramyl-(pentapeptide) pyrophosphoryl-undecaprenol N-acetylglucosamine transferase of Shewanella woodyi (strain ATCC 51908 / MS32).